The following is a 733-amino-acid chain: Zinc finger protein indra (733 aa).

The region spanning 17-91 (VRCDHCGTSQ…RETVDRVQEQ (75 aa)) is the ZAD domain. C19, C22, C64, and C67 together coordinate Zn(2+). The span at 90–100 (EQPAKKTKVAE) shows a compositional bias: basic and acidic residues. Residues 90 to 121 (EQPAKKTKVAEIEEPSTQESDKKAVKVPKKNT) are disordered. A phosphoserine mark is found at S109, S153, and S176. A phosphothreonine mark is found at T180 and T188. 2 C2H2-type zinc fingers span residues 228–251 (FQCPECEFHAKFPKPYKEHLQKEH) and 259–282 (YPCTLCIKTFGVLKTLKNHLRDTH). A compositionally biased stretch (basic and acidic residues) spans 285–316 (TFESEAKTKAKESKEKEAKSGAKNKIDAKAKE). The segment at 285-336 (TFESEAKTKAKESKEKEAKSGAKNKIDAKAKETNAVSQRKKPKEKKSKEKKT) is disordered. C2H2-type zinc fingers lie at residues 416-439 (FQCEICDCELMTAKQMQEHMKTVH) and 447-469 (FKCHVCEKSLATKQSLKTHMTLH). Disordered stretches follow at residues 499–525 (IENTAEKVEGPKKSQQSPTKAAKFTNR) and 540–622 (AFKT…SSDV). The segment covering 592 to 602 (SVSTTNGNSPA) has biased composition (polar residues). Phosphoserine occurs at positions 600, 642, and 646. Position 647 is a phosphothreonine (T647). 2 consecutive C2H2-type zinc fingers follow at residues 653–676 (LSCDRCGKFVKSRQRLDSHMEKKH) and 708–733 (LPCGVANCKKVFTEANFLSSHLRKRH). S654 is modified (phosphoserine).

The protein belongs to the krueppel C2H2-type zinc-finger protein family.

Its subcellular location is the nucleus. The protein resides in the nucleolus. In terms of biological role, required for rDNA copy number maintenance and non-random sister chromatid segregation (NRSS) following unequal sister chromatid exchange. Binds ribosomal DNA (rDNA) preferentially binding to intergenic spacers (IGS) regions on both X and Y chromosomes. Essential for NRSS, a mechanism which contributes to the recovery and maintenance of inherently unstable rDNA copy numbers so that the integrity of the germline genome is upheld over generations and germline immortality is sustained. May be involved in transcriptional regulation. This is Zinc finger protein indra from Drosophila melanogaster (Fruit fly).